The sequence spans 574 residues: Multidrug and toxin extrusion protein 1 (574 aa).

Residues 1–51 (MEGQAAETNHRAETVVRAELCLSAEQGPETTAYSQKRCLFLPMEVWQEAQQ) are Cytoplasmic-facing. Residues 52-72 (LLALAAPAFLSQLMIFLISIV) form a helical membrane-spanning segment. Residues 73–86 (SSIFCGHLGKVELD) are Extracellular-facing. The chain crosses the membrane as a helical span at residues 87–107 (AVSLAITIINITGVAVGTGLA). The Cytoplasmic portion of the chain corresponds to 108-133 (GACDTLISQTFGGSNLKLVGIILQRG). Residues 134–154 (ILILLLFCFPCWALLINTESI) form a helical membrane-spanning segment. Residues 155–168 (LLLFRQDPEVSKLT) lie on the Extracellular side of the membrane. Residues 169-189 (QIYVLIFLPALPAAFLYQLLA) form a helical membrane-spanning segment. Residues 190–204 (KYLQNQGIIYPQVLT) lie on the Cytoplasmic side of the membrane. A helical membrane pass occupies residues 205 to 225 (GFIANIFNALFNYILLYVLGL). Topologically, residues 226–230 (GVMGS) are extracellular. A helical transmembrane segment spans residues 231 to 251 (ACANTVSQFIQMILLFLYIVW). The Cytoplasmic portion of the chain corresponds to 252–271 (RRLYADTWGGWSQACFEEWG). Residues 272–291 (AFIRLAVASMLMLCIEWWAF) traverse the membrane as a helical segment. Over 292-309 (EISMFLAGVLGMVDLAAQ) the chain is Extracellular. A helical membrane pass occupies residues 310–330 (AIIYQVAIVVYLIPLGLCIAG). Residues 331-350 (SIRVGHGLGAGNTEQAKRSA) are Cytoplasmic-facing. Residues 351–371 (LVVLCMTELCALLSGILLATL) traverse the membrane as a helical segment. Residues 372-384 (KDVVAYIFTSDPN) lie on the Extracellular side of the membrane. Residues 385–405 (IVALVSYVLPVYSACLLFDAC) traverse the membrane as a helical segment. Residues 406–430 (VAACGGILRGSGKLKVGAISHTVGY) are Cytoplasmic-facing. A helical transmembrane segment spans residues 431 to 451 (YVIGLPLGISLMFAAKLGIIG). The Extracellular portion of the chain corresponds to 452–453 (FW). A helical membrane pass occupies residues 454–472 (FGILACGIAQSIFLIIFVF). Over 473-549 (KIDWKRASEE…AGAAQHTRTL (77 aa)) the chain is Cytoplasmic. The segment at 500 to 541 (KPSVYQEGCPTEQGDVDPGNVESIEFSQSSTSSEGTSPTPAG) is disordered. Residues 521–538 (ESIEFSQSSTSSEGTSPT) show a composition bias toward low complexity. The helical transmembrane segment at 550-570 (ILTRGLALGCAVGTLIIGIVI) threads the bilayer. Topologically, residues 571-574 (RLSV) are extracellular.

The protein belongs to the multi antimicrobial extrusion (MATE) (TC 2.A.66.1) family.

Its subcellular location is the cell membrane. The protein localises to the apical cell membrane. The enzyme catalyses thiamine(out) + H(+)(in) = thiamine(in) + H(+)(out). The catalysed reaction is estrone 3-sulfate(in) + H(+)(out) = estrone 3-sulfate(out) + H(+)(in). It catalyses the reaction creatinine(in) + H(+)(out) = creatinine(out) + H(+)(in). It carries out the reaction agmatine(in) + H(+)(out) = agmatine(out) + H(+)(in). Its function is as follows. Multidrug efflux pump that functions as a H(+)/organic cation antiporter. Mediates the secretion of cationic compounds including drugs, toxins and endogenous metabolites. Plays a role physiological role in the excretion of drugs, toxins and endogenous metabolites through the kidney and liver, into urine and bile respectively. The sequence is that of Multidrug and toxin extrusion protein 1 (slc47a1) from Xenopus tropicalis (Western clawed frog).